Here is a 211-residue protein sequence, read N- to C-terminus: Porin MspA (211 aa).

The N-terminal stretch at 1–27 (MKAISRVLIAMVAAIAALFTSTGTSHA) is a signal peptide.

This sequence belongs to the mycobacterial porin (TC 1.B.24) family. Forms very stable octamers. Isolated as a 100 kDa complex that can be reduced to monomers upon boiling in 80% dimethyl sulfoxide for 15 minutes. Structures show a goblet with the wide end on the exterior of the outer membrane and a central channel. It is not known if mixed oligomers of MspA with other Msp subunits form in vivo.

The protein resides in the cell outer membrane. The protein localises to the secreted. Its subcellular location is the cell wall. In terms of biological role, the major porin in this organism, forms a water-filled channel which favors the permeation of cations, amino acids, iron Fe(3+) and less efficiently phosphate. Does not transport Fe-ExoMS, the predominant siderophore. Plays a role in transport of beta-lactamase and hydrophilic fluoroquinolone antibiotics such as norfloxacin as well as chloramphenicol. There are about 2400 porins in wild-type, 800 in an mspA deletion and 150 in a double mspA-mspC deletion. Different conductance values with maxima at 2.3 and 4.6 nanosiemens might be caused by a simultaneous reconstitution of MspA channels into the membrane or by the existence of different MspA conformations. This is Porin MspA (mspA) from Mycolicibacterium smegmatis (strain ATCC 700084 / mc(2)155) (Mycobacterium smegmatis).